The primary structure comprises 214 residues: Small ribosomal subunit protein uS5 (214 aa).

The segment at 1-61 is disordered; it reads MTDSSPQSNP…QERDSEWQER (61 aa). A compositionally biased stretch (low complexity) spans 9–29; it reads NPNAVPGAADVPAAAEGQQQQ. The span at 30-60 shows a compositional bias: basic and acidic residues; that stretch reads EQRRGRGDRDGRRGDRRGGRRGQERDSEWQE. Residues 58 to 121 enclose the S5 DRBM domain; that stretch reads WQERVVQIRR…ADGKKHLVKV (64 aa).

The protein belongs to the universal ribosomal protein uS5 family. As to quaternary structure, part of the 30S ribosomal subunit. Contacts proteins S4 and S8.

Its function is as follows. With S4 and S12 plays an important role in translational accuracy. In terms of biological role, located at the back of the 30S subunit body where it stabilizes the conformation of the head with respect to the body. The chain is Small ribosomal subunit protein uS5 from Synechococcus sp. (strain CC9605).